Reading from the N-terminus, the 230-residue chain is Stachydrine N-demethylase reductase subunit Stc3 (230 aa).

It belongs to the non-flavoprotein flavin reductase family. The system is probably composed of an oxygenase subunit (Stc2) and two reductase subunits (Stc3 and Stc4).

Functionally, reductase involved in the catabolism of stachydrine (L-proline betaine), a source of carbon and nitrogen. Part of a Rieske-type oxygenase system that catalyzes the demethylation of stachydrine to produce N-methyl-L-proline (monomethylproline). This subunit is probably involved in the transfer of electrons from NAD(P)H to the catalytic subunit Stc2. The polypeptide is Stachydrine N-demethylase reductase subunit Stc3 (Rhizobium meliloti (strain 1021) (Ensifer meliloti)).